Consider the following 447-residue polypeptide: UPF0210 protein OEOE_0945 (447 aa).

Belongs to the UPF0210 family. In terms of assembly, homodimer.

In Oenococcus oeni (strain ATCC BAA-331 / PSU-1), this protein is UPF0210 protein OEOE_0945.